Reading from the N-terminus, the 574-residue chain is Aspartate--tRNA ligase (574 aa).

An L-aspartate-binding site is contributed by Glu169. The tract at residues 193 to 196 is aspartate; sequence QLFK. Residue Arg215 coordinates L-aspartate. ATP contacts are provided by residues 215-217 and Gln224; that span reads RDE. Residue His437 coordinates L-aspartate. Position 471 (Glu471) interacts with ATP. Arg478 contributes to the L-aspartate binding site. ATP is bound at residue 523 to 526; that stretch reads GLDR.

This sequence belongs to the class-II aminoacyl-tRNA synthetase family. Type 1 subfamily. In terms of assembly, homodimer.

The protein resides in the cytoplasm. The catalysed reaction is tRNA(Asp) + L-aspartate + ATP = L-aspartyl-tRNA(Asp) + AMP + diphosphate. Its function is as follows. Catalyzes the attachment of L-aspartate to tRNA(Asp) in a two-step reaction: L-aspartate is first activated by ATP to form Asp-AMP and then transferred to the acceptor end of tRNA(Asp). This is Aspartate--tRNA ligase from Mycoplasma mycoides subsp. mycoides SC (strain CCUG 32753 / NCTC 10114 / PG1).